A 291-amino-acid polypeptide reads, in one-letter code: Serine hydrolase BPHL (291 aa).

Residues 1–37 (MATATVRPAAQRLRLLLSPLKSRICVPQAEPVATFGT) form the signal peptide. Residues 62 to 173 (AILLLPGMLG…ANAYVTEEDS (112 aa)) enclose the AB hydrolase-1 domain. Lys-74 carries the N6-acetyllysine; alternate modification. Lys-74 carries the post-translational modification N6-succinyllysine; alternate. N6-acetyllysine is present on residues Lys-86 and Lys-119. Residue Lys-126 is modified to N6-acetyllysine; alternate. The residue at position 126 (Lys-126) is an N6-succinyllysine; alternate. The Nucleophile role is filled by Ser-139. The residue at position 184 (Lys-184) is an N6-succinyllysine. An N6-acetyllysine; alternate modification is found at Lys-191. Lys-191 is modified (N6-succinyllysine; alternate). Position 217 is an N6-acetyllysine (Lys-217). Residue Glu-221 coordinates Mg(2+). Lys-243 carries the post-translational modification N6-acetyllysine. The active-site Charge relay system is Asp-244. N6-acetyllysine; alternate occurs at positions 260 and 271. An N6-succinyllysine; alternate mark is found at Lys-260 and Lys-271. His-272 serves as the catalytic Charge relay system.

Belongs to the AB hydrolase superfamily. Lipase family. In terms of assembly, monomer. May also form homodimers.

The protein localises to the mitochondrion. The catalysed reaction is L-homocysteine thiolactone + H2O = L-homocysteine + H(+). The enzyme catalyses valacyclovir + H2O = acyclovir + L-valine + H(+). Its function is as follows. Specific alpha-amino acid ester serine hydrolase that prefers small, hydrophobic, and aromatic side chains and does not have a stringent requirement for the leaving group other than preferring a primary alcohol. Has homocysteine-thiolactonase activity (in vitro) and may play a significant role in the detoxification of homocysteine thiolactone in vivo. Catalyzes the hydrolytic activation of amino acid ester prodrugs of nucleoside analogs such as valacyclovir and valganciclovir, converting them into their active forms (acyclovir and ganciclovir). The protein is Serine hydrolase BPHL (Bphl) of Mus musculus (Mouse).